The chain runs to 208 residues: MSVVFVAASKLPTPFGVFTMHGFLDEATGKEHVALTLGTVDDGAPVLGRLHSECLTGDALFSLRCDCGFQLEAALRAIAAEGRGVLLYLRQEGRGIGLLNKIRAYKLQDAGADTVEANERLGFRADQRDYGICKPMLEHLGITAIKLMTNNPRKVKALEGAGIQVTERVPLQTGLNPHNQKYLATKAGKLGHLLGSLHQGEVETPTGS.

A GTP-binding site is contributed by 49–53; sequence RLHSE. 3 residues coordinate Zn(2+): C54, C65, and C67. GTP contacts are provided by residues Q70, 92–94, and T114; that span reads EGR. D126 acts as the Proton acceptor in catalysis. R128 (nucleophile) is an active-site residue. The GTP site is built by T149 and K154.

Belongs to the GTP cyclohydrolase II family. Requires Zn(2+) as cofactor.

The enzyme catalyses GTP + 4 H2O = 2,5-diamino-6-hydroxy-4-(5-phosphoribosylamino)-pyrimidine + formate + 2 phosphate + 3 H(+). It functions in the pathway cofactor biosynthesis; riboflavin biosynthesis; 5-amino-6-(D-ribitylamino)uracil from GTP: step 1/4. Its function is as follows. Catalyzes the conversion of GTP to 2,5-diamino-6-ribosylamino-4(3H)-pyrimidinone 5'-phosphate (DARP), formate and pyrophosphate. The chain is GTP cyclohydrolase-2 from Azotobacter vinelandii (strain DJ / ATCC BAA-1303).